We begin with the raw amino-acid sequence, 110 residues long: DNA-binding protein Pars_1791 (110 aa).

Belongs to the PDCD5 family.

The chain is DNA-binding protein Pars_1791 from Pyrobaculum arsenaticum (strain DSM 13514 / JCM 11321 / PZ6).